The primary structure comprises 237 residues: HTH-type transcriptional regulator GmuR (237 aa).

Positions 1–69 (MNKYEIIANE…RGHGTFIIQS (69 aa)) constitute an HTH gntR-type domain. Residues 29–48 (EVSLAKEFNSSRMTMKRALD) constitute a DNA-binding region (H-T-H motif).

It localises to the cytoplasm. Functionally, transcriptional repressor of the gmuBACDREFG operon which is involved in the uptake and degradation of glucomannan. The protein is HTH-type transcriptional regulator GmuR (gmuR) of Bacillus subtilis (strain 168).